Consider the following 564-residue polypeptide: Urocanate hydratase (564 aa).

Residues 58–59, glutamine 136, 182–184, glutamate 202, arginine 207, 248–249, 269–273, 279–280, and tyrosine 328 each bind NAD(+); these read GG, GMG, NA, QTSAH, and YL. Cysteine 416 is a catalytic residue. Residue glycine 498 coordinates NAD(+).

Belongs to the urocanase family. It depends on NAD(+) as a cofactor.

Its subcellular location is the cytoplasm. The enzyme catalyses 4-imidazolone-5-propanoate = trans-urocanate + H2O. It functions in the pathway amino-acid degradation; L-histidine degradation into L-glutamate; N-formimidoyl-L-glutamate from L-histidine: step 2/3. In terms of biological role, catalyzes the conversion of urocanate to 4-imidazolone-5-propionate. This is Urocanate hydratase from Aliivibrio salmonicida (strain LFI1238) (Vibrio salmonicida (strain LFI1238)).